The sequence spans 309 residues: Ribosomal RNA large subunit methyltransferase F (309 aa).

The disordered stretch occupies residues 1–21; that stretch reads MASQHDKKSVQSGLLHPRNPH.

Belongs to the methyltransferase superfamily. METTL16/RlmF family.

It localises to the cytoplasm. The catalysed reaction is adenosine(1618) in 23S rRNA + S-adenosyl-L-methionine = N(6)-methyladenosine(1618) in 23S rRNA + S-adenosyl-L-homocysteine + H(+). In terms of biological role, specifically methylates the adenine in position 1618 of 23S rRNA. In Desulfotalea psychrophila (strain LSv54 / DSM 12343), this protein is Ribosomal RNA large subunit methyltransferase F.